The chain runs to 320 residues: MNITALTDNTQGAAGLELYEVYNNGYPTAYGNIIHLKGMTAVGEGELLIGWSGTSGAHAPAFIRSRRDTTDANWSPWAQLYTSAHPPAEFYPVGAPIPWPSDTVPSGYALMQGQTFDKSAYPKLAVAYPSGVIPDMRGWTIKGKPASGRAVLSQEQDGIKSHTHSASASSTDLGTETTSSFDYGTKSTNNTGAHTHSISGTANSAGAHQHKSSGAFGGTNTSIFPNGYTAISNLSAGIMSTTSGSGQTRNAGKTSSDGAHTHSLSGTAASAGAHAHTVGIGAHTHSVAIGSHGHTITVNAAGNAENTVKNIAFNYIVRLA.

Disordered regions lie at residues Ser147–Ser213 and Thr241–Ser270. Polar residues-rich tracts occupy residues Asp172–Gly206 and Thr241–Gly258. The segment covering Thr261–Ser270 has biased composition (low complexity).

This sequence belongs to the tail fiber family.

The protein is Prophage side tail fiber protein homolog StfQ (stfQ) of Escherichia coli (strain K12).